The sequence spans 208 residues: ATP phosphoribosyltransferase (208 aa).

The protein belongs to the ATP phosphoribosyltransferase family. Short subfamily. As to quaternary structure, heteromultimer composed of HisG and HisZ subunits.

Its subcellular location is the cytoplasm. The catalysed reaction is 1-(5-phospho-beta-D-ribosyl)-ATP + diphosphate = 5-phospho-alpha-D-ribose 1-diphosphate + ATP. It functions in the pathway amino-acid biosynthesis; L-histidine biosynthesis; L-histidine from 5-phospho-alpha-D-ribose 1-diphosphate: step 1/9. Its function is as follows. Catalyzes the condensation of ATP and 5-phosphoribose 1-diphosphate to form N'-(5'-phosphoribosyl)-ATP (PR-ATP). Has a crucial role in the pathway because the rate of histidine biosynthesis seems to be controlled primarily by regulation of HisG enzymatic activity. The polypeptide is ATP phosphoribosyltransferase (Clostridioides difficile (strain 630) (Peptoclostridium difficile)).